The sequence spans 450 residues: Probable galactarate/D-glucarate transporter GudP (450 aa).

Residues 1-20 (MSSLSQAASSVEKRTNARYW) are Cytoplasmic-facing. Residues 21-41 (IVVMLFIVTSFNYGDRATLSI) traverse the membrane as a helical segment. Residues 42–58 (AGSEMAKDIGLDPVGMG) are Periplasmic-facing. Residues 59 to 79 (YVFSAFSWAYVIGQIPGGWLL) traverse the membrane as a helical segment. The Cytoplasmic segment spans residues 80 to 85 (DRFGSK). A helical membrane pass occupies residues 86–105 (RVYFWSIFIWSMFTLLQGFV). At 106–109 (DIFS) the chain is on the periplasmic side. A helical membrane pass occupies residues 110–132 (GFGIIVALFTLRFLVGLAEAPSF). Residues 133–153 (PGNSRIVAAWFPAQERGTAVS) lie on the Cytoplasmic side of the membrane. Residues 154 to 174 (IFNSAQYFATVIFAPIMGWLT) form a helical membrane-spanning segment. At 175-176 (HE) the chain is on the periplasmic side. The chain crosses the membrane as a helical span at residues 177–197 (VGWSHVFFFMGGLGIVISFIW). The Cytoplasmic segment spans residues 198 to 254 (LKVIHEPNQHPGVNKKELEYIAAGGALINMDQQNTKVKVPFSVKWGQIKQLLGSRMM). The helical transmembrane segment at 255 to 275 (IGVYIGQYCINALTYFFITWF) threads the bilayer. Residues 276-290 (PVYLVQARGMSILKA) are Periplasmic-facing. Residues 291–311 (GFVASVPAVCGFIGGVLGGII) form a helical membrane-spanning segment. Topologically, residues 312 to 329 (SDWLMRRTGSLNIARKTP) are cytoplasmic. A helical transmembrane segment spans residues 330-350 (IVMGMLLSMVMVFCNYVNVEW). A topological domain (periplasmic) is located at residue Met-351. Residues 352 to 372 (IIGFMALAFFGKGIGALGWAV) form a helical membrane-spanning segment. Residues 373-387 (MADTAPKEISGLSGG) lie on the Cytoplasmic side of the membrane. A helical transmembrane segment spans residues 388–408 (LFNMFGNISGIVTPIAIGYIV). Residues 409 to 415 (GTTGSFN) lie on the Periplasmic side of the membrane. The helical transmembrane segment at 416–436 (GALIYVGVHALIAVLSYLVLV) threads the bilayer. Over 437-450 (GDIKRIELKPVAGQ) the chain is Cytoplasmic.

This sequence belongs to the major facilitator superfamily. Phthalate permease family.

The protein localises to the cell inner membrane. The catalysed reaction is galactarate(in) + H(+)(in) = galactarate(out) + H(+)(out). It catalyses the reaction D-glucarate(in) + H(+)(in) = D-glucarate(out) + H(+)(out). It carries out the reaction (R)-glycerate(in) + H(+)(in) = (R)-glycerate(out) + H(+)(out). Its function is as follows. Probably involved in the uptake of galactarate and/or D-glucarate. May also transport D-glycerate. This Escherichia coli (strain K12) protein is Probable galactarate/D-glucarate transporter GudP.